Here is a 235-residue protein sequence, read N- to C-terminus: Protein Thf1 (235 aa).

A coiled-coil region spans residues 183-204; the sequence is DKLNKDLELYRSNLDKMAQALV. The segment at 213-235 is disordered; sequence DRKKREQRKQQSTAPVAPPSSNE. Residues 222-235 are compositionally biased toward polar residues; sequence QQSTAPVAPPSSNE.

This sequence belongs to the THF1 family.

Its function is as follows. May be involved in photosynthetic membrane biogenesis. In Nostoc punctiforme (strain ATCC 29133 / PCC 73102), this protein is Protein Thf1.